We begin with the raw amino-acid sequence, 250 residues long: tRNA (guanine-N(7)-)-methyltransferase (250 aa).

A compositionally biased stretch (basic and acidic residues) spans 1–10 (MTPDDPRDAS). The interval 1 to 30 (MTPDDPRDASDASLADATADSASRGHGSFF) is disordered. The span at 11–24 (DASLADATADSASR) shows a compositional bias: low complexity. S-adenosyl-L-methionine-binding residues include Glu-79, Glu-104, Asp-131, and Asp-153. Residue Asp-153 is part of the active site. Lys-157 and Asp-189 together coordinate substrate.

Belongs to the class I-like SAM-binding methyltransferase superfamily. TrmB family.

The catalysed reaction is guanosine(46) in tRNA + S-adenosyl-L-methionine = N(7)-methylguanosine(46) in tRNA + S-adenosyl-L-homocysteine. It functions in the pathway tRNA modification; N(7)-methylguanine-tRNA biosynthesis. Its function is as follows. Catalyzes the formation of N(7)-methylguanine at position 46 (m7G46) in tRNA. This is tRNA (guanine-N(7)-)-methyltransferase from Rhodopseudomonas palustris (strain BisA53).